The primary structure comprises 135 residues: ATP synthase epsilon chain (135 aa).

This sequence belongs to the ATPase epsilon chain family. In terms of assembly, F-type ATPases have 2 components, CF(1) - the catalytic core - and CF(0) - the membrane proton channel. CF(1) has five subunits: alpha(3), beta(3), gamma(1), delta(1), epsilon(1). CF(0) has three main subunits: a, b and c.

Its subcellular location is the cell inner membrane. In terms of biological role, produces ATP from ADP in the presence of a proton gradient across the membrane. The polypeptide is ATP synthase epsilon chain (Rhodopseudomonas palustris (strain ATCC BAA-98 / CGA009)).